A 322-amino-acid polypeptide reads, in one-letter code: Ribosomal RNA small subunit methyltransferase H (322 aa).

S-adenosyl-L-methionine contacts are provided by residues 40–42 (GGH), aspartate 60, phenylalanine 84, aspartate 106, and glutamine 113.

It belongs to the methyltransferase superfamily. RsmH family.

Its subcellular location is the cytoplasm. The catalysed reaction is cytidine(1402) in 16S rRNA + S-adenosyl-L-methionine = N(4)-methylcytidine(1402) in 16S rRNA + S-adenosyl-L-homocysteine + H(+). In terms of biological role, specifically methylates the N4 position of cytidine in position 1402 (C1402) of 16S rRNA. The chain is Ribosomal RNA small subunit methyltransferase H from Aggregatibacter aphrophilus (strain NJ8700) (Haemophilus aphrophilus).